Consider the following 2242-residue polypeptide: Large tegument protein deneddylase (2242 aa).

The deubiquitination activity stretch occupies residues 1–238; the sequence is MKVTQASCHQ…IDLTGVVRES (238 aa). In terms of domain architecture, Peptidase C76 spans 4-226; that stretch reads TQASCHQGDI…AARLVSTYRD (223 aa). Residues C24, D160, and H162 contribute to the active site. Positions 239 to 318 are disordered; the sequence is ADTAATTTTA…KTLATASSSS (80 aa). Positions 240–250 are enriched in low complexity; sequence DTAATTTTAAP. A compositionally biased stretch (pro residues) spans 251–268; that stretch reads SLPPLPDPIVDPGCPPGV. Over residues 304–318 the composition is skewed to low complexity; sequence PSTTSKTLATASSSS. Positions 328-332 are interaction with inner tegument protein; sequence SSAVP. Residues 1173 to 1190 are compositionally biased toward polar residues; it reads SQQKMEGQLQETRQQMTE. A disordered region spans residues 1173–1229; that stretch reads SQQKMEGQLQETRQQMTETSERLDRSLRQDPGSSSVTRVPEKPFKGQELAGRITPPP. Basic and acidic residues predominate over residues 1191–1200; the sequence is TSERLDRSLR.

The protein belongs to the herpesviridae large tegument protein family. In terms of assembly, interacts with host CUL1 and CUL4A; these interactions inhibit the E3 ligase activity of cullins. Interacts with inner tegument protein. Interacts with capsid vertex specific component CVC2. Interacts with the major capsid protein/MCP.

The protein localises to the virion tegument. The protein resides in the host cytoplasm. It is found in the host nucleus. It carries out the reaction Thiol-dependent hydrolysis of ester, thioester, amide, peptide and isopeptide bonds formed by the C-terminal Gly of ubiquitin (a 76-residue protein attached to proteins as an intracellular targeting signal).. Large tegument protein that plays multiple roles in the viral cycle. During viral entry, remains associated with the capsid while most of the tegument is detached and participates in the capsid transport toward the host nucleus. Plays a role in the routing of the capsid at the nuclear pore complex and subsequent uncoating. Within the host nucleus, acts as a deneddylase and promotes the degradation of nuclear CRLs (cullin-RING ubiquitin ligases) and thereby stabilizes nuclear CRL substrates, while cytoplasmic CRLs remain unaffected. These modifications prevent host cell cycle S-phase progression and create a favorable environment allowing efficient viral genome replication. Participates later in the secondary envelopment of capsids. Indeed, plays a linker role for the association of the outer viral tegument to the capsids together with the inner tegument protein. This Homo sapiens (Human) protein is Large tegument protein deneddylase.